The primary structure comprises 207 residues: uncharacterized protein (207 aa).

Its subcellular location is the mitochondrion. This is an uncharacterized protein from Marchantia polymorpha (Common liverwort).